Consider the following 352-residue polypeptide: Ribosomal RNA large subunit methyltransferase M (352 aa).

S-adenosyl-L-methionine contacts are provided by residues S187, 218–221 (APGG), D237, D257, and D273. K302 functions as the Proton acceptor in the catalytic mechanism.

Belongs to the class I-like SAM-binding methyltransferase superfamily. RNA methyltransferase RlmE family. RlmM subfamily. As to quaternary structure, monomer.

It localises to the cytoplasm. The catalysed reaction is cytidine(2498) in 23S rRNA + S-adenosyl-L-methionine = 2'-O-methylcytidine(2498) in 23S rRNA + S-adenosyl-L-homocysteine + H(+). In terms of biological role, catalyzes the 2'-O-methylation at nucleotide C2498 in 23S rRNA. This is Ribosomal RNA large subunit methyltransferase M from Methylococcus capsulatus (strain ATCC 33009 / NCIMB 11132 / Bath).